Here is a 385-residue protein sequence, read N- to C-terminus: MTSLGIVTPQSMFFSTPLPLQSGAEITDYTLVYETYGTLNADHSNAVLVCHALNASHHVAGSYSEDASTRGWWDNMVGPGKPLDTDKFFVIGVNNLGSCFGSTGPMHANPATGKPYGPQFPVVTVEDWVQSQARLADALGIRQFAAVMGGSLGGMQALAWSILFPERLRHCVVIASTPKLTAQNIAFDDVARQAILTDPDYHGGDYYAHGVVPKNGLRVARMLGHITYLSDDDMAVKFGRDLRSGSYQFGFGIDFEIESYLRYQGDKFSEYFDANTYLLITKALDYFDPAKDFGGDLTKTLSHTRAQFLLVSFSTDWRFAPERSHEMVQALVNNKRMVTYAEIDASHGHDAFLLDDARYMSVVRAYYERVYKEIDGGSLKAGAQV.

The 311-residue stretch at 45–355 (NAVLVCHALN…SHGHDAFLLD (311 aa)) folds into the AB hydrolase-1 domain. The active-site Nucleophile is Ser-151. Arg-221 is a substrate binding site. Residues Asp-316 and His-349 contribute to the active site. Asp-350 lines the substrate pocket.

This sequence belongs to the AB hydrolase superfamily. MetX family. Homodimer.

It is found in the cytoplasm. It catalyses the reaction L-homoserine + succinyl-CoA = O-succinyl-L-homoserine + CoA. It participates in amino-acid biosynthesis; L-methionine biosynthesis via de novo pathway; O-succinyl-L-homoserine from L-homoserine: step 1/1. Its function is as follows. Transfers a succinyl group from succinyl-CoA to L-homoserine, forming succinyl-L-homoserine. This is Homoserine O-succinyltransferase from Herminiimonas arsenicoxydans.